The chain runs to 291 residues: 4-diphosphocytidyl-2-C-methyl-D-erythritol kinase (291 aa).

K14 is an active-site residue. Residue 96–106 (PFGAGLGGGSS) coordinates ATP. The active site involves D138.

This sequence belongs to the GHMP kinase family. IspE subfamily.

It catalyses the reaction 4-CDP-2-C-methyl-D-erythritol + ATP = 4-CDP-2-C-methyl-D-erythritol 2-phosphate + ADP + H(+). Its pathway is isoprenoid biosynthesis; isopentenyl diphosphate biosynthesis via DXP pathway; isopentenyl diphosphate from 1-deoxy-D-xylulose 5-phosphate: step 3/6. In terms of biological role, catalyzes the phosphorylation of the position 2 hydroxy group of 4-diphosphocytidyl-2C-methyl-D-erythritol. In Chlorobium phaeovibrioides (strain DSM 265 / 1930) (Prosthecochloris vibrioformis (strain DSM 265)), this protein is 4-diphosphocytidyl-2-C-methyl-D-erythritol kinase.